We begin with the raw amino-acid sequence, 504 residues long: Maturase K (504 aa).

The protein belongs to the intron maturase 2 family. MatK subfamily.

Its subcellular location is the plastid. The protein resides in the chloroplast. Its function is as follows. Usually encoded in the trnK tRNA gene intron. Probably assists in splicing its own and other chloroplast group II introns. The chain is Maturase K from Chimaphila umbellata (Pipsissewa).